The following is a 307-amino-acid chain: Methionyl-tRNA formyltransferase (307 aa).

110–113 (SLLP) is a binding site for (6S)-5,6,7,8-tetrahydrofolate.

Belongs to the Fmt family.

The enzyme catalyses L-methionyl-tRNA(fMet) + (6R)-10-formyltetrahydrofolate = N-formyl-L-methionyl-tRNA(fMet) + (6S)-5,6,7,8-tetrahydrofolate + H(+). In terms of biological role, attaches a formyl group to the free amino group of methionyl-tRNA(fMet). The formyl group appears to play a dual role in the initiator identity of N-formylmethionyl-tRNA by promoting its recognition by IF2 and preventing the misappropriation of this tRNA by the elongation apparatus. In Rhodococcus erythropolis (strain PR4 / NBRC 100887), this protein is Methionyl-tRNA formyltransferase.